Consider the following 124-residue polypeptide: Small ribosomal subunit protein eS6 (124 aa).

This sequence belongs to the eukaryotic ribosomal protein eS6 family.

The polypeptide is Small ribosomal subunit protein eS6 (Methanococcus maripaludis (strain C6 / ATCC BAA-1332)).